Here is a 599-residue protein sequence, read N- to C-terminus: Elongation factor 4 (599 aa).

The region spanning 4–186 is the tr-type G domain; that stretch reads EHIRNFSIIA…EIVKKIPPPK (183 aa). GTP is bound by residues 16–21 and 133–136; these read DHGKST and NKID.

Belongs to the TRAFAC class translation factor GTPase superfamily. Classic translation factor GTPase family. LepA subfamily.

The protein localises to the cell inner membrane. The catalysed reaction is GTP + H2O = GDP + phosphate + H(+). Functionally, required for accurate and efficient protein synthesis under certain stress conditions. May act as a fidelity factor of the translation reaction, by catalyzing a one-codon backward translocation of tRNAs on improperly translocated ribosomes. Back-translocation proceeds from a post-translocation (POST) complex to a pre-translocation (PRE) complex, thus giving elongation factor G a second chance to translocate the tRNAs correctly. Binds to ribosomes in a GTP-dependent manner. The protein is Elongation factor 4 of Citrifermentans bemidjiense (strain ATCC BAA-1014 / DSM 16622 / JCM 12645 / Bem) (Geobacter bemidjiensis).